An 876-amino-acid chain; its full sequence is Alanine--tRNA ligase (876 aa).

K74 carries the N6-acetyllysine modification. Zn(2+) is bound by residues H564, H568, C666, and H670.

The protein belongs to the class-II aminoacyl-tRNA synthetase family. Homotetramer. Requires Zn(2+) as cofactor.

It localises to the cytoplasm. The enzyme catalyses tRNA(Ala) + L-alanine + ATP = L-alanyl-tRNA(Ala) + AMP + diphosphate. In terms of biological role, catalyzes the attachment of alanine to tRNA(Ala) in a two-step reaction: alanine is first activated by ATP to form Ala-AMP and then transferred to the acceptor end of tRNA(Ala). Also edits incorrectly charged Ser-tRNA(Ala) and Gly-tRNA(Ala) via its editing domain. The sequence is that of Alanine--tRNA ligase from Escherichia coli O1:K1 / APEC.